A 361-amino-acid polypeptide reads, in one-letter code: Peptide chain release factor 1 (361 aa).

N5-methylglutamine is present on Gln-235. Residues 283–306 (RSQQATAEAMTRKLQVGSGDRSQR) form a disordered region.

The protein belongs to the prokaryotic/mitochondrial release factor family. Methylated by PrmC. Methylation increases the termination efficiency of RF1.

It localises to the cytoplasm. In terms of biological role, peptide chain release factor 1 directs the termination of translation in response to the peptide chain termination codons UAG and UAA. The chain is Peptide chain release factor 1 from Xylella fastidiosa (strain M23).